A 141-amino-acid chain; its full sequence is Early nodulin-like protein 19 (141 aa).

The signal sequence occupies residues M1–A26. The Phytocyanin domain maps to K27–T127. Residues N42 and N88 are each glycosylated (N-linked (GlcNAc...) asparagine). A disulfide bridge connects residues C80 and C115.

It belongs to the early nodulin-like (ENODL) family.

May act as a carbohydrate transporter. The sequence is that of Early nodulin-like protein 19 from Arabidopsis thaliana (Mouse-ear cress).